A 517-amino-acid chain; its full sequence is 2-isopropylmalate synthase (517 aa).

The Pyruvate carboxyltransferase domain occupies 5–268 (IIIFDTTLRD…DTRINTQEIH (264 aa)). Residues Asp14, His202, His204, and Asn238 each coordinate Mn(2+). A regulatory domain region spans residues 393-517 (SLDVITSQTI…ADLKSHKISQ (125 aa)).

Belongs to the alpha-IPM synthase/homocitrate synthase family. LeuA type 1 subfamily. In terms of assembly, homodimer. Requires Mn(2+) as cofactor.

Its subcellular location is the cytoplasm. The enzyme catalyses 3-methyl-2-oxobutanoate + acetyl-CoA + H2O = (2S)-2-isopropylmalate + CoA + H(+). It functions in the pathway amino-acid biosynthesis; L-leucine biosynthesis; L-leucine from 3-methyl-2-oxobutanoate: step 1/4. Functionally, catalyzes the condensation of the acetyl group of acetyl-CoA with 3-methyl-2-oxobutanoate (2-ketoisovalerate) to form 3-carboxy-3-hydroxy-4-methylpentanoate (2-isopropylmalate). This chain is 2-isopropylmalate synthase, found in Histophilus somni (strain 2336) (Haemophilus somnus).